Here is a 455-residue protein sequence, read N- to C-terminus: 2-succinylbenzoate--CoA ligase (455 aa).

This sequence belongs to the ATP-dependent AMP-binding enzyme family. MenE subfamily.

It carries out the reaction 2-succinylbenzoate + ATP + CoA = 2-succinylbenzoyl-CoA + AMP + diphosphate. The protein operates within quinol/quinone metabolism; 1,4-dihydroxy-2-naphthoate biosynthesis; 1,4-dihydroxy-2-naphthoate from chorismate: step 5/7. It functions in the pathway quinol/quinone metabolism; menaquinone biosynthesis. In terms of biological role, converts 2-succinylbenzoate (OSB) to 2-succinylbenzoyl-CoA (OSB-CoA). The polypeptide is 2-succinylbenzoate--CoA ligase (Salmonella typhimurium (strain LT2 / SGSC1412 / ATCC 700720)).